The sequence spans 358 residues: Dynein axonemal assembly factor 10 (358 aa).

WD repeat units follow at residues 64–106 (EKPK…TPVY), 116–155 (NCID…TPVA), 163–206 (ETKR…VRWE), 208–250 (NIKN…PSKG), 258–298 (AHKS…QRSR), and 320–358 (LSTQ…LNKL).

In terms of assembly, interacts with PIH1D1; the interaction associates DNAAF10 with the R2TP complex. Interacts with several dynein axonemal assembly factors.

The protein localises to the dynein axonemal particle. In terms of biological role, key assembly factor specifically required for the stability of axonemal dynein heavy chains in cytoplasm. The polypeptide is Dynein axonemal assembly factor 10 (dnaaf10) (Xenopus tropicalis (Western clawed frog)).